A 550-amino-acid chain; its full sequence is Arginine--tRNA ligase (550 aa).

The 'HIGH' region signature appears at 130 to 140 (ANPTGPIHIGG).

It belongs to the class-I aminoacyl-tRNA synthetase family. As to quaternary structure, monomer.

The protein localises to the cytoplasm. The enzyme catalyses tRNA(Arg) + L-arginine + ATP = L-arginyl-tRNA(Arg) + AMP + diphosphate. This Mycolicibacterium paratuberculosis (strain ATCC BAA-968 / K-10) (Mycobacterium paratuberculosis) protein is Arginine--tRNA ligase.